Here is a 428-residue protein sequence, read N- to C-terminus: 3-phosphoshikimate 1-carboxyvinyltransferase (428 aa).

3-phosphoshikimate-binding residues include Lys23, Ser24, and Arg28. Lys23 lines the phosphoenolpyruvate pocket. 2 residues coordinate phosphoenolpyruvate: Gly97 and Arg125. Positions 170, 171, 172, 198, 314, 337, and 341 each coordinate 3-phosphoshikimate. A phosphoenolpyruvate-binding site is contributed by Gln172. Asp314 serves as the catalytic Proton acceptor. Residues Arg345, Arg387, and Lys412 each coordinate phosphoenolpyruvate.

It belongs to the EPSP synthase family. As to quaternary structure, monomer.

It is found in the cytoplasm. It carries out the reaction 3-phosphoshikimate + phosphoenolpyruvate = 5-O-(1-carboxyvinyl)-3-phosphoshikimate + phosphate. It participates in metabolic intermediate biosynthesis; chorismate biosynthesis; chorismate from D-erythrose 4-phosphate and phosphoenolpyruvate: step 6/7. Functionally, catalyzes the transfer of the enolpyruvyl moiety of phosphoenolpyruvate (PEP) to the 5-hydroxyl of shikimate-3-phosphate (S3P) to produce enolpyruvyl shikimate-3-phosphate and inorganic phosphate. This Serratia proteamaculans (strain 568) protein is 3-phosphoshikimate 1-carboxyvinyltransferase.